The primary structure comprises 73 residues: UPF0235 protein PCC7424_0673 (73 aa).

The protein belongs to the UPF0235 family.

The protein is UPF0235 protein PCC7424_0673 of Gloeothece citriformis (strain PCC 7424) (Cyanothece sp. (strain PCC 7424)).